Reading from the N-terminus, the 219-residue chain is Suppressor-of-stellate-like protein (219 aa).

Positions serine 194–phenylalanine 219 are disordered. Residues serine 204–phenylalanine 219 show a composition bias toward polar residues.

The protein belongs to the casein kinase 2 subunit beta family.

This chain is Suppressor-of-stellate-like protein (Ssl), found in Drosophila melanogaster (Fruit fly).